The chain runs to 296 residues: 6-hydroxypseudooxynicotine dehydrogenase complex subunit alpha (296 aa).

The 177-residue stretch at 1-177 (MKPPSFDYVV…VEVNVPQLPH (177 aa)) folds into the FAD-binding PCMH-type domain. FAD contacts are provided by residues 30–37 (IIAGGQSL), 111–115 (TIGGS), and E124.

As to quaternary structure, heterohexamer of 2 alpha (kdhA), 2 beta (kdhB) and 2 gamma (kdhC) subunit. Dimer of heterotrimers. FAD serves as cofactor.

The enzyme catalyses 6-hydroxypseudooxynicotine + A + H2O = 2,6-dihydroxypseudooxynicotine + AH2. It functions in the pathway alkaloid degradation; nicotine degradation. In terms of biological role, molybdo-flavoprotein enzyme complex involved in nicotine degradation. The subunit gamma (large subunit) contains the substrate-binding sites, the subunit alpha (medium subunit) binds FAD and the subunit beta (small subunit) has a 2Fe-2S ferredoxin-type domain which binds 2 2Fe-2S clusters. The sequence is that of 6-hydroxypseudooxynicotine dehydrogenase complex subunit alpha (kdhA) from Paenarthrobacter nicotinovorans (Arthrobacter nicotinovorans).